We begin with the raw amino-acid sequence, 313 residues long: MPASIGGLPLPRICPHFLTLRVAIRAHLTDHVHIGLSGGPDSLALVAAARAEGAEVTAICINHNLQEGSAEVSERAAAQAEHMGATALIRSITVPPGSMEAQAREARYAEFAQLTDTIWAGHTMDDQAETFLLAGLRGNPAGMKSASRRPDLTVIRPLLGVRRADTHGACTELGLTPWQDPQNRDRAFRRVAIREQVLPLLAEIHAGDPVPGLALAATRAAMEGEALEFFVDKRRGEWADGFPVRLAAEPHALRRLMLADFLRGHGVRVTSKKIEAVDRLLTHWHGQGGVAVGGGAHGRLEVVRVSGKLEITG.

37-42 (SGGPDS) contributes to the ATP binding site.

It belongs to the tRNA(Ile)-lysidine synthase family.

The protein resides in the cytoplasm. It carries out the reaction cytidine(34) in tRNA(Ile2) + L-lysine + ATP = lysidine(34) in tRNA(Ile2) + AMP + diphosphate + H(+). Ligates lysine onto the cytidine present at position 34 of the AUA codon-specific tRNA(Ile) that contains the anticodon CAU, in an ATP-dependent manner. Cytidine is converted to lysidine, thus changing the amino acid specificity of the tRNA from methionine to isoleucine. In Corynebacterium efficiens (strain DSM 44549 / YS-314 / AJ 12310 / JCM 11189 / NBRC 100395), this protein is tRNA(Ile)-lysidine synthase.